The following is a 181-amino-acid chain: Adenine phosphoribosyltransferase (181 aa).

It belongs to the purine/pyrimidine phosphoribosyltransferase family. As to quaternary structure, homodimer.

Its subcellular location is the cytoplasm. The enzyme catalyses AMP + diphosphate = 5-phospho-alpha-D-ribose 1-diphosphate + adenine. It participates in purine metabolism; AMP biosynthesis via salvage pathway; AMP from adenine: step 1/1. In terms of biological role, catalyzes a salvage reaction resulting in the formation of AMP, that is energically less costly than de novo synthesis. The chain is Adenine phosphoribosyltransferase from Methylobacterium nodulans (strain LMG 21967 / CNCM I-2342 / ORS 2060).